A 447-amino-acid chain; its full sequence is C4-dicarboxylate transport protein (447 aa).

The next 9 membrane-spanning stretches (helical) occupy residues 13-33 (SLYF…HYWP), 49-69 (LIKM…IAGM), 81-101 (LALL…LLIV), 149-169 (AFAK…GFAL), 189-209 (VLFA…FGAM), 227-247 (LMGT…GLIA), 302-322 (GYSF…VFIA), 336-356 (TLLA…GSGF), and 357-377 (IVLA…LALI). Positions 422 to 447 (ETEAEANEPEAVLDEIDQHMPVPAAR) are disordered. Residues 425-436 (AEANEPEAVLDE) are compositionally biased toward acidic residues.

This sequence belongs to the dicarboxylate/amino acid:cation symporter (DAACS) (TC 2.A.23) family.

The protein localises to the cell inner membrane. Responsible for the transport of dicarboxylates such as succinate, fumarate, and malate from the periplasm across the membrane. This is C4-dicarboxylate transport protein from Leptothrix cholodnii (strain ATCC 51168 / LMG 8142 / SP-6) (Leptothrix discophora (strain SP-6)).